A 316-amino-acid chain; its full sequence is Transaldolase (316 aa).

The active-site Schiff-base intermediate with substrate is Lys-127.

This sequence belongs to the transaldolase family. Type 2 subfamily.

It localises to the cytoplasm. The catalysed reaction is D-sedoheptulose 7-phosphate + D-glyceraldehyde 3-phosphate = D-erythrose 4-phosphate + beta-D-fructose 6-phosphate. It functions in the pathway carbohydrate degradation; pentose phosphate pathway; D-glyceraldehyde 3-phosphate and beta-D-fructose 6-phosphate from D-ribose 5-phosphate and D-xylulose 5-phosphate (non-oxidative stage): step 2/3. Transaldolase is important for the balance of metabolites in the pentose-phosphate pathway. This Helicobacter pylori (strain Shi470) protein is Transaldolase.